Consider the following 2664-residue polypeptide: Inositol 1,4,5-trisphosphate-gated calcium channel ITPR3 (2664 aa).

At 1–2227 (MSEMSSFLHI…YVEGASTGVL (2227 aa)) the chain is on the cytoplasmic side. 5 MIR domains span residues 113–173 (GDVV…LRSN), 174–224 (GDNV…INLF), 232–288 (EEVL…VEVV), 295–372 (GGAG…LDPT), and 378–434 (DSFV…IVSV). 1D-myo-inositol 1,4,5-trisphosphate contacts are provided by Arg-266, Thr-268, Leu-269, and Arg-270. The tract at residues 320–344 (NPSYKGDASDPKAAGTGAQGRTGRR) is disordered. Residues Arg-503, Lys-507, Arg-510, Tyr-567, Arg-568, and Lys-569 each coordinate 1D-myo-inositol 1,4,5-trisphosphate. Arg-743 serves as a coordination point for Ca(2+). 2 positions are modified to phosphoserine: Ser-909 and Ser-927. Glu-1115 and Glu-1118 together coordinate Ca(2+). 2 disordered regions span residues 1124–1158 (KGASKGEEGEAGPAKDKKERPTDEEGFLHPPGEKS) and 1790–1850 (QQET…VGER). Residues 1792-1805 (ETKSTVAVNMSDLG) show a composition bias toward polar residues. A phosphoserine mark is found at Ser-1806, Ser-1825, and Ser-1827. Residues Glu-1875 and Glu-1939 each contribute to the Ca(2+) site. ATP contacts are provided by Ala-1989, Glu-2142, and Lys-2145. Residues 2228 to 2248 (GSPLISLLFWILICFSIAALF) form a helical membrane-spanning segment. The Extracellular segment spans residues 2249–2256 (TKRYSVRP). A helical membrane pass occupies residues 2257 to 2277 (LIVALILRSIYYLGIGPTLNI). The Cytoplasmic portion of the chain corresponds to 2278–2286 (LGALNLTNK). A helical membrane pass occupies residues 2287–2304 (IVFVVSFVGNRGTFIRGY). Topologically, residues 2305–2318 (KAMVMDMEFLYHVG) are extracellular. The chain crosses the membrane as a helical span at residues 2319 to 2339 (YILTSVLGLFAHELFYSILLF). The Cytoplasmic portion of the chain corresponds to 2340–2361 (DLIYREETLFNVIKSVTRNGRS). Residues 2362 to 2382 (ILLTALLALILVYLFSIVGFL) traverse the membrane as a helical segment. The Extracellular portion of the chain corresponds to 2383-2489 (FLKDDFILEV…ESLFPARVVY (107 aa)). The cysteines at positions 2448 and 2454 are disulfide-linked. The helical transmembrane segment at 2490 to 2510 (DLLFFFIVIIIVLNLIFGVII) threads the bilayer. Topologically, residues 2511–2664 (DTFADLRSEK…FVDVQNCMSR (154 aa)) are cytoplasmic. Positions 2531 and 2532 each coordinate ATP. Residue Cys-2531 participates in Zn(2+) binding. Residues Cys-2534 and His-2551 each coordinate Zn(2+). 4 residues coordinate ATP: Lys-2553, His-2556, Asn-2557, and Met-2558. His-2556 contributes to the Zn(2+) binding site. Thr-2574 lines the Ca(2+) pocket. 2 positions are modified to phosphoserine: Ser-2602 and Ser-2663.

Belongs to the InsP3 receptor family. In terms of assembly, homotetramer. Homodimer. Interacts with TRPC1, TRPC3 and TRPC4. Interacts with TRPV4. Interacts with SIGMAR1. Interacts with PML and AKT1. Interacts with IRAG2 (via coiled-coil domain). Interacts with CABP1. Interacts with TMBIM4/LFG4. Interacts with CEMIP. Interacts with TESPA1. Interacts with TMEM203. Interacts with BOK; regulates ITPR3 expression. Interacts with BCL2L10. Interacts with CHGA and CHGB. Post-translationally, phosphorylated by AKT1 on serine and/or threonine residues.

It localises to the endoplasmic reticulum membrane. Its subcellular location is the cytoplasmic vesicle. The protein localises to the secretory vesicle membrane. It carries out the reaction Ca(2+)(in) = Ca(2+)(out). Its activity is regulated as follows. Inositol 1,4,5-trisphosphate-gated calcium channel is regulated by cytosolic calcium in a biphasic manner. At low concentrations, cytosolic calcium binds at a high-affinity juxtamembrane domain (JD) calcium binding site, allowing ITPR3 to activate by escaping a low-energy resting state through an ensemble of preactivated states. At high cytosolic calcium concentrations, ITPR3 preferentially enters an inhibited state stabilized by calcium binding at a second, low-affinity cytoplasmic domain (CD) calcium binding site. Inositol 1,4,5-trisphosphate-gated calcium channel that, upon 1D-myo-inositol 1,4,5-trisphosphate binding, transports calcium from the endoplasmic reticulum lumen to cytoplasm, thus releasing the intracellular calcium and therefore participates in cellular calcium ion homeostasis. 1D-myo-inositol 1,4,5-trisphosphate binds to the ligand-free channel without altering its global conformation, yielding the low-energy resting state, then progresses through resting-to preactivated transitions to the higher energy preactivated state, which increases affinity for calcium, promoting binding of the low basal cytosolic calcium at the juxtamembrane domain (JD) site, favoring the transition through the ensemble of high-energy intermediate states along the trajectory to the fully-open activated state. Upon opening, releases calcium in the cytosol where it can bind to the low-affinity cytoplasmic domain (CD) site and stabilizes the inhibited state to terminate calcium release. The polypeptide is Inositol 1,4,5-trisphosphate-gated calcium channel ITPR3 (Bos taurus (Bovine)).